The following is a 235-amino-acid chain: MMNQMGMMMQQQGVGVPGGPGGVGGVGMPGPGGVGVAPGMMQSPQMQQAQQQQVQQQQVQQQQVQQQQVQQQQQQVQQQQQQQQQHSQSAQQQAQQTEKVDNISKVKVLVGPLRDALSTTIKTAAQLIQQNTLADAGSKTVDLNNAPRFDKHLEEFYSICDQIELNLKTTKLCMQQCTSSQQYLPIPVATSQPPLPETNALTYNQYLEVVKLQIGYAKDIHDTLICAAQNISPSE.

Low complexity predominate over residues 1-14 (MMNQMGMMMQQQGV). The interval 1–54 (MMNQMGMMMQQQGVGVPGGPGGVGGVGMPGPGGVGVAPGMMQSPQMQQAQQQQV) is disordered. A compositionally biased stretch (gly residues) spans 15–36 (GVPGGPGGVGGVGMPGPGGVGV). Low complexity predominate over residues 37–54 (APGMMQSPQMQQAQQQQV).

The protein belongs to the Mediator complex subunit 29 family. Component of the Mediator complex.

It localises to the nucleus. Its function is as follows. Component of the Mediator complex, a coactivator involved in the regulated transcription of nearly all RNA polymerase II-dependent genes. Mediator functions as a bridge to convey information from gene-specific regulatory proteins to the basal RNA polymerase II transcription machinery. Mediator is recruited to promoters by direct interactions with regulatory proteins and serves as a scaffold for the assembly of a functional preinitiation complex with RNA polymerase II and the general transcription factors. This chain is Mediator of RNA polymerase II transcription subunit 29 (ix), found in Anopheles gambiae (African malaria mosquito).